The primary structure comprises 279 residues: Undecaprenyl-diphosphatase (279 aa).

Transmembrane regions (helical) follow at residues 2–22 (LIIE…TEWL), 44–64 (AFIE…VMLI), 85–105 (WQLW…AVPL), 113–133 (FYFM…FIWI), 163–183 (VLSI…AIIL), 188–208 (TVAA…YSGL), 223–243 (AQVL…LLAI), and 255–275 (FTIF…YSFF).

It belongs to the UppP family.

Its subcellular location is the cell membrane. The enzyme catalyses di-trans,octa-cis-undecaprenyl diphosphate + H2O = di-trans,octa-cis-undecaprenyl phosphate + phosphate + H(+). Functionally, catalyzes the dephosphorylation of undecaprenyl diphosphate (UPP). Confers resistance to bacitracin. In Streptococcus pyogenes serotype M5 (strain Manfredo), this protein is Undecaprenyl-diphosphatase.